The primary structure comprises 233 residues: DNA repair protein RecO (233 aa).

Belongs to the RecO family.

Its function is as follows. Involved in DNA repair and RecF pathway recombination. The chain is DNA repair protein RecO from Pseudomonas paraeruginosa (strain DSM 24068 / PA7) (Pseudomonas aeruginosa (strain PA7)).